Consider the following 596-residue polypeptide: Protein Malvolio (596 aa).

Residues 1 to 34 (MSSNEAYHEPGAGGDGPGGSSGASGGGSQRSNQL) form a disordered region. A compositionally biased stretch (gly residues) spans 11-28 (GAGGDGPGGSSGASGGGS). Residue asparagine 41 is glycosylated (N-linked (GlcNAc...) asparagine). 7 helical membrane passes run 77 to 97 (LWAF…PGNI), 105 to 125 (AAAK…GLLM), 154 to 174 (WILW…EVIG), 186 to 206 (VVPL…FLFL), 216 to 236 (FLFG…YIVS), 263 to 283 (AVGV…SALV), and 309 to 329 (VALF…AHGM). A glycan (N-linked (GlcNAc...) asparagine) is linked at asparagine 359. A run of 5 helical transmembrane segments spans residues 373-393 (LFLG…GILA), 424-444 (VLVT…FSKM), 463-483 (PFAA…GEFV), 490-510 (IVSI…VVVQ), and 520-540 (LLAL…YLVI). N-linked (GlcNAc...) asparagine glycosylation is present at asparagine 574.

The protein belongs to the NRAMP family. As to expression, expressed in macrophages and in the nervous system.

Its subcellular location is the membrane. Functionally, putative transporter required for normal taste behavior. May be a nitrite/nitrate transporter. This Drosophila melanogaster (Fruit fly) protein is Protein Malvolio (Mvl).